Reading from the N-terminus, the 166-residue chain is Protein FAM89A (166 aa).

This sequence belongs to the FAM89 family.

This is Protein FAM89A (fam89a) from Xenopus laevis (African clawed frog).